The sequence spans 204 residues: Peptide deformylase (204 aa).

Positions 131 and 174 each coordinate Fe cation. E175 is an active-site residue. Fe cation is bound at residue H178.

This sequence belongs to the polypeptide deformylase family. Requires Fe(2+) as cofactor.

It carries out the reaction N-terminal N-formyl-L-methionyl-[peptide] + H2O = N-terminal L-methionyl-[peptide] + formate. In terms of biological role, removes the formyl group from the N-terminal Met of newly synthesized proteins. Requires at least a dipeptide for an efficient rate of reaction. N-terminal L-methionine is a prerequisite for activity but the enzyme has broad specificity at other positions. This Streptococcus equi subsp. zooepidemicus (strain MGCS10565) protein is Peptide deformylase.